The sequence spans 549 residues: MKNINPTQTQAWQALEAHFAANKETRLKDLFAQDPKRFDKFSLTFGGDILVDYSKNLITEETLKLLVDLAKETDLRSAIDAMFNGEKINMTEGRSVLHVALRNRSDRPIECDGKDVMPEVNAVLAKMKGFCEKIISGEWKGYTGKAIQHVVNIGIGGSDLGPVMITEALRPYKNHLQMHFVSNVDGTHIAETLKEIDAETTLFLVASKTFTTQETMTNALTARDWFIKIAGDKAHVAKHFAALSTNGKAVAEFGIDTDNMFEFWDWVGGRYSSWSAIGMPIALSVGFDNFEALLQGAFEMDMHFATASYEQNVPVLLALIGLWYNNFHGAESEAILPYDQYMHRFPAYFQQGNMESNGKYVDRNGNPVDHQTGPIIWGEPGTNGQHAFYQLIHQGTKLIPCDFLAPAISHNPIGDHHPKLLANFFAQTEALAFGKSKEQVEAEFLAAGKTLEQVEDLVPFKVFEGNRPTNSILFKSLTPKTLGALIAMYEHKIFVQGAIWNIFSFDQWGVELGKQLANKILPELNTAEAVTSHDCSTNGLINTWKAWKA.

E355 (proton donor) is an active-site residue. Active-site residues include H386 and K514.

The protein belongs to the GPI family.

It localises to the cytoplasm. It carries out the reaction alpha-D-glucose 6-phosphate = beta-D-fructose 6-phosphate. It functions in the pathway carbohydrate biosynthesis; gluconeogenesis. It participates in carbohydrate degradation; glycolysis; D-glyceraldehyde 3-phosphate and glycerone phosphate from D-glucose: step 2/4. Its function is as follows. Catalyzes the reversible isomerization of glucose-6-phosphate to fructose-6-phosphate. This chain is Glucose-6-phosphate isomerase, found in Aeromonas salmonicida (strain A449).